The primary structure comprises 200 residues: 3-isopropylmalate dehydratase small subunit (200 aa).

It belongs to the LeuD family. LeuD type 1 subfamily. As to quaternary structure, heterodimer of LeuC and LeuD.

It carries out the reaction (2R,3S)-3-isopropylmalate = (2S)-2-isopropylmalate. It functions in the pathway amino-acid biosynthesis; L-leucine biosynthesis; L-leucine from 3-methyl-2-oxobutanoate: step 2/4. Catalyzes the isomerization between 2-isopropylmalate and 3-isopropylmalate, via the formation of 2-isopropylmaleate. The protein is 3-isopropylmalate dehydratase small subunit of Arthrobacter sp. (strain FB24).